The chain runs to 437 residues: Tol-Pal system protein TolB (437 aa).

The first 30 residues, 1–30 (MLPTPSRSHKLSGYAAVLFFLWLVCSPAQA), serve as a signal peptide directing secretion. Residues 410–423 (SDGRTRQQLSTQTG) are compositionally biased toward polar residues. The segment at 410-437 (SDGRTRQQLSTQTGDIREPAWGPLRRLQ) is disordered.

This sequence belongs to the TolB family. The Tol-Pal system is composed of five core proteins: the inner membrane proteins TolA, TolQ and TolR, the periplasmic protein TolB and the outer membrane protein Pal. They form a network linking the inner and outer membranes and the peptidoglycan layer.

Its subcellular location is the periplasm. Its function is as follows. Part of the Tol-Pal system, which plays a role in outer membrane invagination during cell division and is important for maintaining outer membrane integrity. The protein is Tol-Pal system protein TolB of Nitrosospira multiformis (strain ATCC 25196 / NCIMB 11849 / C 71).